The following is a 294-amino-acid chain: MDSPFRTIGLIGKPNHPDAAATLQRLHTFLLALGFTVIVEKRTGSQLIDIPKNKLVKLVDLGEQADLAIVVGGDGNMLGAARVLARFDIAVIGVNRGNLGFLTDLNPEGFEASLEQVLSGEYVEEKRFLLEVEVYRHNELKSANSAVNEAVLHADKVAHMIEFEAFINNDFVFSQRSDGLIVSTPTGSTAYSLSGGGPILTPELNAIALVPMFPHTLSSRPLVVDADNEVRLKLSLENTDSLQVSCDSHVVLAVLPGDEVVIKKADKKLRLIHPKNYSYYNVLRQKLNWGSRLY.

The active-site Proton acceptor is the D74. Residues 74 to 75, 148 to 149, H159, R176, D178, and 189 to 194 contribute to the NAD(+) site; these read DG, NE, and TAYSLS.

This sequence belongs to the NAD kinase family. Requires a divalent metal cation as cofactor.

It is found in the cytoplasm. The catalysed reaction is NAD(+) + ATP = ADP + NADP(+) + H(+). In terms of biological role, involved in the regulation of the intracellular balance of NAD and NADP, and is a key enzyme in the biosynthesis of NADP. Catalyzes specifically the phosphorylation on 2'-hydroxyl of the adenosine moiety of NAD to yield NADP. In Pseudoalteromonas translucida (strain TAC 125), this protein is NAD kinase.